The following is a 240-amino-acid chain: Uridylate kinase (240 aa).

ATP is bound by residues 15-18 (KISG), G58, and R62. UMP is bound by residues D77 and 138-145 (TGNPLFTT). ATP is bound by residues T165, Y171, and D174.

It belongs to the UMP kinase family. Homohexamer.

Its subcellular location is the cytoplasm. It carries out the reaction UMP + ATP = UDP + ADP. It participates in pyrimidine metabolism; CTP biosynthesis via de novo pathway; UDP from UMP (UMPK route): step 1/1. Inhibited by UTP. Catalyzes the reversible phosphorylation of UMP to UDP. The protein is Uridylate kinase of Buchnera aphidicola subsp. Schizaphis graminum (strain Sg).